The following is a 182-amino-acid chain: Putative manganese efflux pump MntP (182 aa).

6 helical membrane-spanning segments follow: residues 7-27, 38-58, 71-91, 106-126, 131-151, and 159-179; these read IISI…VSLG, IAYI…AGML, TSFA…FSAF, LWII…GLGI, IFVT…LGML, and FLGV…GIFI.

Belongs to the MntP (TC 9.B.29) family.

Its subcellular location is the cell membrane. Its function is as follows. Probably functions as a manganese efflux pump. The chain is Putative manganese efflux pump MntP from Oceanobacillus iheyensis (strain DSM 14371 / CIP 107618 / JCM 11309 / KCTC 3954 / HTE831).